The primary structure comprises 873 residues: Leucine--tRNA ligase (873 aa).

Residues 48-58 (PYPSGKLHMGH) carry the 'HIGH' region motif. Positions 636 to 640 (KMSKS) match the 'KMSKS' region motif. Lys-639 is a binding site for ATP.

This sequence belongs to the class-I aminoacyl-tRNA synthetase family.

It is found in the cytoplasm. The catalysed reaction is tRNA(Leu) + L-leucine + ATP = L-leucyl-tRNA(Leu) + AMP + diphosphate. The sequence is that of Leucine--tRNA ligase from Cupriavidus pinatubonensis (strain JMP 134 / LMG 1197) (Cupriavidus necator (strain JMP 134)).